The following is a 148-amino-acid chain: Urease accessory protein UreE (148 aa).

The protein belongs to the UreE family.

It localises to the cytoplasm. Involved in urease metallocenter assembly. Binds nickel. Probably functions as a nickel donor during metallocenter assembly. In Nostoc punctiforme (strain ATCC 29133 / PCC 73102), this protein is Urease accessory protein UreE.